The following is a 429-amino-acid chain: Ribosomal RNA small subunit methyltransferase B (429 aa).

S-adenosyl-L-methionine-binding positions include 254-260, aspartate 277, aspartate 303, and aspartate 322; that span reads CAAPGGK. Residue cysteine 375 is the Nucleophile of the active site. The tract at residues 397-419 is disordered; it reads ALSETGTPDQPGQQNLPGGEEGD. Residues 400–412 show a composition bias toward polar residues; sequence ETGTPDQPGQQNL.

The protein belongs to the class I-like SAM-binding methyltransferase superfamily. RsmB/NOP family.

It is found in the cytoplasm. It carries out the reaction cytidine(967) in 16S rRNA + S-adenosyl-L-methionine = 5-methylcytidine(967) in 16S rRNA + S-adenosyl-L-homocysteine + H(+). Specifically methylates the cytosine at position 967 (m5C967) of 16S rRNA. The protein is Ribosomal RNA small subunit methyltransferase B of Salmonella newport (strain SL254).